Consider the following 293-residue polypeptide: Formamidopyrimidine-DNA glycosylase (293 aa).

The active-site Schiff-base intermediate with DNA is the proline 2. Glutamate 3 acts as the Proton donor in catalysis. Lysine 58 functions as the Proton donor; for beta-elimination activity in the catalytic mechanism. Histidine 104, arginine 123, and lysine 166 together coordinate DNA. The FPG-type zinc finger occupies 257–293; the sequence is KVYDREGETCKTPACGGTIKRFTQNGRSTFWCPKCQK. Catalysis depends on arginine 283, which acts as the Proton donor; for delta-elimination activity.

This sequence belongs to the FPG family. As to quaternary structure, monomer. Zn(2+) serves as cofactor.

The catalysed reaction is Hydrolysis of DNA containing ring-opened 7-methylguanine residues, releasing 2,6-diamino-4-hydroxy-5-(N-methyl)formamidopyrimidine.. The enzyme catalyses 2'-deoxyribonucleotide-(2'-deoxyribose 5'-phosphate)-2'-deoxyribonucleotide-DNA = a 3'-end 2'-deoxyribonucleotide-(2,3-dehydro-2,3-deoxyribose 5'-phosphate)-DNA + a 5'-end 5'-phospho-2'-deoxyribonucleoside-DNA + H(+). Functionally, involved in base excision repair of DNA damaged by oxidation or by mutagenic agents. Acts as a DNA glycosylase that recognizes and removes damaged bases. Has a preference for oxidized purines, such as 7,8-dihydro-8-oxoguanine (8-oxoG). Has AP (apurinic/apyrimidinic) lyase activity and introduces nicks in the DNA strand. Cleaves the DNA backbone by beta-delta elimination to generate a single-strand break at the site of the removed base with both 3'- and 5'-phosphates. The polypeptide is Formamidopyrimidine-DNA glycosylase (Bradyrhizobium diazoefficiens (strain JCM 10833 / BCRC 13528 / IAM 13628 / NBRC 14792 / USDA 110)).